The chain runs to 282 residues: MPLFGAHMSAAGGVSNAIRDIVEIGGEVLQLFTANQRQWTPKAPSEADVEAFGRRRAAFGGPVFSHASYLINIANGDGAASAKAVEALVREFERCTALGVDAVVLHPGAHLGAGRGTGILRAARNIDEVFDRCGGQTPVLLLENTAGQGTCLGGDLNDLAEIIDASRHASQLGVCLDTAHAFGAGYALHTDEGYRRCMEDIEHGPGLAAVRLFHVNDSLVPCGSRKDRHTHIGEGQLGEAAFVRLLNDPVFAMHPMVLETPKEDGHAADRRNLATLRRLARS.

9 residues coordinate Zn(2+): H66, H106, E143, D177, H180, H214, D227, H229, and E259.

The protein belongs to the AP endonuclease 2 family. Zn(2+) is required as a cofactor.

It carries out the reaction Endonucleolytic cleavage to 5'-phosphooligonucleotide end-products.. Its function is as follows. Endonuclease IV plays a role in DNA repair. It cleaves phosphodiester bonds at apurinic or apyrimidinic (AP) sites, generating a 3'-hydroxyl group and a 5'-terminal sugar phosphate. The protein is Probable endonuclease 4 of Nitratidesulfovibrio vulgaris (strain ATCC 29579 / DSM 644 / CCUG 34227 / NCIMB 8303 / VKM B-1760 / Hildenborough) (Desulfovibrio vulgaris).